Consider the following 399-residue polypeptide: MSKIEQKNQSEVIKLAIDLMSRASVTPEDAGCQKLMAQRLAQLGFTNESMIFADTTNLWSRRDSTNATKEDDLVFCFAGHTDVVPAGNLELWNTPPFEPTIIDGMLYGRGAADMKGSLAAMIVATERFVQDHPDHHGSITYLITSDEEGPFINGTTKVIDTLEARNEKITYCIVGEPSSTHAVGDIVKNGRRGSISAEVDIKGKQGHVAYPDHVRNPIHLAMPALTELSQVQWDNGNDYFPATSFQLSNINAGTGATNVVPGHINALFNLRYSTELTDQIIVEQVESILDKHQLDYDIKWTFNGKPFITEHVESEHGFLNAVSQAILSVTGTETQLSTSGGTSDGRFIAPTGAQVIELGPCNATIHQVNESVSCDDLEKLVDIYYHCLVNVLCTHKTIS.

His-80 serves as a coordination point for Zn(2+). The active site involves Asp-82. Asp-113 is a Zn(2+) binding site. Glu-147 functions as the Proton acceptor in the catalytic mechanism. Zn(2+) contacts are provided by Glu-148, Glu-176, and His-366.

It belongs to the peptidase M20A family. DapE subfamily. In terms of assembly, homodimer. It depends on Zn(2+) as a cofactor. Co(2+) is required as a cofactor.

The catalysed reaction is N-succinyl-(2S,6S)-2,6-diaminopimelate + H2O = (2S,6S)-2,6-diaminopimelate + succinate. It participates in amino-acid biosynthesis; L-lysine biosynthesis via DAP pathway; LL-2,6-diaminopimelate from (S)-tetrahydrodipicolinate (succinylase route): step 3/3. Catalyzes the hydrolysis of N-succinyl-L,L-diaminopimelic acid (SDAP), forming succinate and LL-2,6-diaminopimelate (DAP), an intermediate involved in the bacterial biosynthesis of lysine and meso-diaminopimelic acid, an essential component of bacterial cell walls. This Colwellia psychrerythraea (strain 34H / ATCC BAA-681) (Vibrio psychroerythus) protein is Succinyl-diaminopimelate desuccinylase.